The following is an 864-amino-acid chain: 3-O-alpha-D-mannopyranosyl-alpha-D-mannopyranose xylosylphosphotransferase (864 aa).

The disordered stretch occupies residues 1–66 (MPSTALSPPS…VPPRSPSRKI (66 aa)). Residues 1 to 82 (MPSTALSPPS…HIRPHITPRT (82 aa)) are Cytoplasmic-facing. 2 stretches are compositionally biased toward low complexity: residues 16 to 29 (SYDS…PSSP) and 42 to 52 (SPSPSRLESLL). Residues 83–103 (LTPVFLWTLALWLIHHFLFPL) form a helical membrane-spanning segment. Residues 104–864 (SSPFAKLAKP…WDPVKDRYND (761 aa)) lie on the Lumenal side of the membrane. N-linked (GlcNAc...) asparagine glycans are attached at residues Asn-200, Asn-301, and Asn-583.

Belongs to the XPT1 family. Mn(2+) is required as a cofactor.

Its subcellular location is the golgi apparatus membrane. The enzyme catalyses 3-alpha-D-mannopyranosyl-alpha-D-mannopyranose + UDP-alpha-D-xylose = 3-O-(6-O-alpha-D-xylosylphospho-alpha-D-mannopyranosyl)-alpha-D-mannopyranose + UMP + H(+). Xylosylphosphotransferase that is specific for UDP-xylose as a donor and mannose as an acceptor to form a xylose-alpha-1-phosphate-6-mannose linkage. Functions in the O-glycosylation of proteins en route through the secretory pathway. The chain is 3-O-alpha-D-mannopyranosyl-alpha-D-mannopyranose xylosylphosphotransferase (XPT1) from Cryptococcus neoformans var. grubii (Filobasidiella neoformans var. grubii).